The following is a 458-amino-acid chain: UDP-N-acetylmuramoylalanine--D-glutamate ligase (458 aa).

Residue 124-130 coordinates ATP; sequence GSDGKTT.

It belongs to the MurCDEF family.

It localises to the cytoplasm. The catalysed reaction is UDP-N-acetyl-alpha-D-muramoyl-L-alanine + D-glutamate + ATP = UDP-N-acetyl-alpha-D-muramoyl-L-alanyl-D-glutamate + ADP + phosphate + H(+). It participates in cell wall biogenesis; peptidoglycan biosynthesis. In terms of biological role, cell wall formation. Catalyzes the addition of glutamate to the nucleotide precursor UDP-N-acetylmuramoyl-L-alanine (UMA). This chain is UDP-N-acetylmuramoylalanine--D-glutamate ligase, found in Clostridium novyi (strain NT).